A 343-amino-acid polypeptide reads, in one-letter code: Ribosomal RNA small subunit methyltransferase C (343 aa).

This sequence belongs to the methyltransferase superfamily. RsmC family. Monomer.

It is found in the cytoplasm. It carries out the reaction guanosine(1207) in 16S rRNA + S-adenosyl-L-methionine = N(2)-methylguanosine(1207) in 16S rRNA + S-adenosyl-L-homocysteine + H(+). Specifically methylates the guanine in position 1207 of 16S rRNA in the 30S particle. The chain is Ribosomal RNA small subunit methyltransferase C from Escherichia coli O8 (strain IAI1).